A 116-amino-acid polypeptide reads, in one-letter code: PTS system cellobiose-specific EIIA component (116 aa).

Residues aspartate 11 to arginine 109 enclose the PTS EIIA type-3 domain. Histidine 85 functions as the Tele-phosphohistidine intermediate in the catalytic mechanism. Histidine 85 is subject to Phosphohistidine; by HPr. Residue aspartate 88 participates in Mg(2+) binding.

In terms of assembly, homotrimer. The cofactor is Mg(2+).

The phosphoenolpyruvate-dependent sugar phosphotransferase system (sugar PTS), a major carbohydrate active transport system, catalyzes the phosphorylation of incoming sugar substrates concomitantly with their translocation across the cell membrane. Involved in cellobiose transport with PtcB and CelB. This system can also transport lactose. The polypeptide is PTS system cellobiose-specific EIIA component (Lactococcus lactis subsp. lactis (strain IL1403) (Streptococcus lactis)).